The sequence spans 699 residues: Envelope glycoprotein G (699 aa).

Residues 1-22 (MHAIAPRLLLLFVLSGLPGTRG) form the signal peptide. Residues 23–650 (GSGVPGPINP…WFLTASPALD (628 aa)) are Virion surface-facing. 2 N-linked (GlcNAc...) asparagine; by host glycosylation sites follow: Asn104 and Asn163. Disordered regions lie at residues 302 to 390 (PGAL…TTPP) and 403 to 632 (TPEE…PSGP). Basic and acidic residues predominate over residues 323–336 (LRTDPEGVDPDVRA). The span at 348–359 (EDTSSDSPTSAP) shows a compositional bias: polar residues. Composition is skewed to low complexity over residues 376–390 (DPSA…TTPP) and 403–447 (TPEE…AKTP). Asn437 carries an N-linked (GlcNAc...) asparagine; by host glycan. 2 stretches are compositionally biased toward pro residues: residues 448–459 (PTTPAPTTPPPT) and 467–482 (PTTP…PATP). The segment covering 483–531 (GPVGASAAPTADSPLTASPPATAPGPSAANVSVAATTATPGTRGTARTP) has biased composition (low complexity). The N-linked (GlcNAc...) asparagine; by host glycan is linked to Asn512. The segment covering 544–554 (DAPPGSPAPPP) has biased composition (pro residues). Residues 562-578 (EEFEGAGDGEPPEDDDS) are compositionally biased toward acidic residues. Over residues 589–605 (PNKPPPARPGPIRPTLP) the composition is skewed to pro residues. Residues 651-671 (ILFIISTTIHTAAFVCLVALA) form a helical membrane-spanning segment. Residues 672–699 (AQLWRGRAGRRRYAHPSVRYVCLPPERD) lie on the Intravirion side of the membrane.

This sequence belongs to the alphaherpesvirinae glycoprotein G family.

Its subcellular location is the virion membrane. Its function is as follows. Chemokine-binding protein that inhibits neutrophils' chemotaxis. This Human herpesvirus 2 (strain HG52) (HHV-2) protein is Envelope glycoprotein G (gG).